We begin with the raw amino-acid sequence, 303 residues long: Mycothiol acetyltransferase (303 aa).

N-acetyltransferase domains are found at residues 1–150 (MALL…RPLD) and 162–303 (VTIR…QFGR). Glu18 lines the 1D-myo-inositol 2-(L-cysteinylamino)-2-deoxy-alpha-D-glucopyranoside pocket. 77 to 79 (LAV) contacts acetyl-CoA. Residues Glu189, Lys229, and Glu237 each coordinate 1D-myo-inositol 2-(L-cysteinylamino)-2-deoxy-alpha-D-glucopyranoside. Acetyl-CoA contacts are provided by residues 241–243 (VGV) and 248–254 (QGNGLGR). Tyr275 serves as a coordination point for 1D-myo-inositol 2-(L-cysteinylamino)-2-deoxy-alpha-D-glucopyranoside. 280–285 (NTAAIK) contacts acetyl-CoA.

This sequence belongs to the acetyltransferase family. MshD subfamily. As to quaternary structure, monomer.

It carries out the reaction 1D-myo-inositol 2-(L-cysteinylamino)-2-deoxy-alpha-D-glucopyranoside + acetyl-CoA = mycothiol + CoA + H(+). Catalyzes the transfer of acetyl from acetyl-CoA to desacetylmycothiol (Cys-GlcN-Ins) to form mycothiol. The chain is Mycothiol acetyltransferase from Saccharopolyspora erythraea (strain ATCC 11635 / DSM 40517 / JCM 4748 / NBRC 13426 / NCIMB 8594 / NRRL 2338).